Consider the following 162-residue polypeptide: Transcription elongation factor GreA (162 aa).

The stretch at 9-38 forms a coiled coil; it reads QGYKALEEELARLKSERPEIIQAIKEAREE.

Belongs to the GreA/GreB family.

Functionally, necessary for efficient RNA polymerase transcription elongation past template-encoded arresting sites. The arresting sites in DNA have the property of trapping a certain fraction of elongating RNA polymerases that pass through, resulting in locked ternary complexes. Cleavage of the nascent transcript by cleavage factors such as GreA or GreB allows the resumption of elongation from the new 3'terminus. GreA releases sequences of 2 to 3 nucleotides. This Desulfovibrio desulfuricans (strain ATCC 27774 / DSM 6949 / MB) protein is Transcription elongation factor GreA.